Here is a 185-residue protein sequence, read N- to C-terminus: GLNDFQKQKIKFTFDFFLDMNHDGSIQDNDFEDMMTRYKEVNKGSLSDADYKSMQASLEDEWRDLKGRADINKDDVVSWEEYLAMWEKTIATCKSVADLPAWCQNRIPFLFKGMDVSGDGIVDLEEFQNYCKNFQLQCADVPAVYNVITDGGKVTFDLNRYKELYYRLLTSPAADAGNTLMGQKP.

EF-hand domains are found at residues 5–41 (FQKQ…YKEV), 57–92 (SLED…TIAT), 102–137 (WCQN…FQLQ), and 138–173 (CADV…TSPA). Ca(2+) is bound by residues D19, N21, D23, S25, D30, D70, N72, D74, E81, D115, S117, D119, and E126.

Like parvalbumins, SCPs seem to be more abundant in fast contracting muscles, but no functional relationship can be established from this distribution. This is Sarcoplasmic calcium-binding proteins II, V, VI, and VII from Branchiostoma lanceolatum (Common lancelet).